The primary structure comprises 343 residues: Major capsid protein VP1 (343 aa).

Belongs to the polyomaviruses coat protein VP1 family. In terms of assembly, homomultimer; disulfide-linked. The virus capsid is composed of 72 icosahedral units, each one composed of five disulfide-linked copies of VP1. Interacts with minor capsid proteins VP2 and VP3.

It localises to the virion. It is found in the host nucleus. Its function is as follows. Forms an icosahedral capsid with a T=7 symmetry and a 46-48 nm diameter. The capsid is composed of 72 pentamers linked to each other by disulfide bonds and associated with VP2 or VP3 proteins. Interacts with sialic acids on the cell surface to provide virion attachment to target cell. Once attached, the virion is internalized by endocytosis and traffics to the endoplasmic reticulum. Inside the endoplasmic reticulum, the protein folding machinery isomerizes VP1 interpentamer disulfide bonds, thereby triggering initial uncoating. Next, the virion uses the endoplasmic reticulum-associated degradation machinery to probably translocate in the cytosol before reaching the nucleus. Nuclear entry of the viral DNA involves the selective exposure and importin recognition of VP2/Vp3 nuclear localization signal. In late phase of infection, neo-synthesized VP1 encapsulates replicated genomic DNA in the nucleus, and participates in rearranging nucleosomes around the viral DNA. The sequence is that of Major capsid protein VP1 from Psittacidae (parrots).